A 1773-amino-acid polypeptide reads, in one-letter code: Zinc finger CCCH domain-containing protein 19 (1773 aa).

The segment at 145–166 is disordered; it reads SGDRLEENKEVSMEEEPSSHEL. Over residues 147–156 the composition is skewed to basic and acidic residues; the sequence is DRLEENKEVS. Residues 196–218 adopt a coiled-coil conformation; it reads GEEIESDLESKKEKVDVIEEETT. 3 disordered regions span residues 270-290, 361-409, and 434-591; these read IGEG…DVTE, DVDK…AGQT, and ISEM…KTVK. Composition is skewed to basic and acidic residues over residues 273-286 and 361-378; these read GAKD…KEGV and DVDK…HVPE. Residues 403–437 adopt a coiled-coil conformation; sequence AEEAGQTVDLEEIREENQELSKELAQVDETKISEM. Basic and acidic residues-rich tracts occupy residues 444-455 and 497-513; these read MIKDEDQEKDDN and KVDR…TDTR. 2 stretches are compositionally biased toward acidic residues: residues 514 to 529 and 551 to 572; these read IEDE…TDVA and EEMT…EVEE. Residues 578–588 show a composition bias toward basic residues; the sequence is GGKRKRGRNTK. The short motif at 581 to 588 is the Nuclear localization signal 1 element; it reads RKRGRNTK. The PHD-type zinc finger occupies 599–665; sequence EDVCFMCFDG…TYLCYTCMFS (67 aa). A compositionally biased stretch (basic and acidic residues) spans 741 to 751; sequence AKRPLKGHETN. The disordered stretch occupies residues 741 to 797; the sequence is AKRPLKGHETNASKQGTASETDYVTDGGSDSDSSPKKRKTRSRSKSGSAEKILSSGD. Positions 752-762 are enriched in polar residues; sequence ASKQGTASETD. Residues 801-884 form the SWIB/MDM2 domain; the sequence is SDETMEWASK…LNLLDSHFLK (84 aa). Residues 903–919 are compositionally biased toward basic and acidic residues; sequence PNHVDVDENLDHPVKSG. Residues 903–935 are disordered; that stretch reads PNHVDVDENLDHPVKSGKDKKRKTRKKNVRKGR. The segment covering 920–935 has biased composition (basic residues); sequence KDKKRKTRKKNVRKGR. The short motif at 921–928 is the Nuclear localization signal 2 element; the sequence is DKKRKTRK. Residues 944-1076 enclose the Plus3 domain; the sequence is AVDMHNINLI…KAIALQEVRV (133 aa). Positions 1139 to 1152 are enriched in basic and acidic residues; that stretch reads EEIPEIHADPKMDP. Residues 1139-1274 are disordered; it reads EEIPEIHADP…PETPARSSRA (136 aa). The segment covering 1153 to 1163 has biased composition (acidic residues); the sequence is DCESEDEDEKE. Polar residues predominate over residues 1193-1212; sequence FSSNESWTGTSNYSNTSANR. Position 1281 is a phosphoserine (serine 1281). The GYF domain occupies 1307–1361; it reads EKIWHYKDPSGKVQGPFSMAQLRKWNNTGYFPAKLEIWKANESPLDSVLLTDALA. 4 stretches are compositionally biased toward polar residues: residues 1409–1433, 1441–1469, 1499–1509, and 1518–1528; these read RNSQ…TTPT, SRWS…QSQT, VSVNHSATLHS, and SWGSMQTDHGG. Disordered regions lie at residues 1409–1469, 1485–1605, and 1649–1746; these read RNSQ…QSQT, QPQT…SWGQ, and GQTQ…QQNN. A compositionally biased stretch (low complexity) spans 1529-1555; it reads SNTPSSQNNSTSYGTPSPSVLPSQSQP. Polar residues predominate over residues 1569–1579; sequence SQPNAQAQAQW. 2 stretches are compositionally biased toward low complexity: residues 1585-1602 and 1666-1677; these read NNNQ…QNSS and QSQSQSQVQAQA. Residues 1678–1708 are compositionally biased toward polar residues; sequence GTTGSGWMQPGQGIQSGNSNQNWGTQNQTAI. Positions 1722-1735 are enriched in low complexity; that stretch reads GNQQQSQNGDSGYG. The segment covering 1737–1746 has biased composition (polar residues); it reads NRQSGGQQNN. The segment at 1747-1773 adopts a C3H1-type zinc-finger fold; sequence FKGQRVCKFFRENGHCRKGASCNYLHN.

Interacts with unmethylated histone H3 and AGO2. The interaction with AGO2 in required to direct DNA methylation and silencing. In terms of tissue distribution, expressed in seedlings, mostly in the vasculature and shoot apices of young seedlings.

Its subcellular location is the nucleus. In terms of biological role, plays a central role in integrating RNA silencing and chromatin signals in 21 nt siRNA-dependent DNA methylation on cytosine pathway leading to transcriptional gene silencing of specific sequences. Involved in a chromatin-based RNA silencing pathway that encompasses both post-transcriptional gene silencing (PTGS) (e.g. RDR1, RDR6 and AGO2) and transcriptional gene silencing (TGS) (e.g. siRNA-dependent DNA methylation and histone H3) components. Mediates siRNA accumulation at specific chromatin loci. Binds H3K4me0 through its PHD to enforce low levels of H3K4 methylation and gene silencing at a subset of genomic loci. This chain is Zinc finger CCCH domain-containing protein 19 (NERD), found in Arabidopsis thaliana (Mouse-ear cress).